The chain runs to 339 residues: MTVADPRLTDAPAHSRTSLLGRRRGGRPPRFPRAAAYVALTKPRIVELLLITTIPVMLFAAGGLPSGWLILTTFVGGALAAGCANTLNCYFDRDIDALMKRTENRPLVTGEVSPRQALVFATVLGIASTAIFVAFVNVLSAALALGAILLYVVGYTLLLKRRTSQNIVWGGVAGCMQVLIGWTAVRDSLDWAPFVLFGVIFLWTPPHYWPLSVRYREDYANAGVPMLPVVAKPTTVSRQIVLYTIAMVLCSLLLVPLGGAGVVYGAAALVLGIGFLVQTIGLHRRATRFEVETGGRDAGTLEQLKRISPMGVFHGSITYLTLLSAAVAVDPFVRVGWPF.

Positions 1-27 (MTVADPRLTDAPAHSRTSLLGRRRGGR) are disordered. The next 9 helical transmembrane spans lie at 45–65 (IVEL…GGLP), 67–87 (GWLI…ANTL), 117–136 (ALVF…VAFV), 140–159 (SAAL…TLLL), 165–185 (QNIV…WTAV), 191–211 (WAPF…YWPL), 236–256 (VSRQ…LLVP), 257–277 (LGGA…GFLV), and 309–329 (PMGV…AVAV).

This sequence belongs to the UbiA prenyltransferase family. Protoheme IX farnesyltransferase subfamily.

It localises to the cell membrane. The catalysed reaction is heme b + (2E,6E)-farnesyl diphosphate + H2O = Fe(II)-heme o + diphosphate. The protein operates within porphyrin-containing compound metabolism; heme O biosynthesis; heme O from protoheme: step 1/1. In terms of biological role, converts heme B (protoheme IX) to heme O by substitution of the vinyl group on carbon 2 of heme B porphyrin ring with a hydroxyethyl farnesyl side group. This is Protoheme IX farnesyltransferase from Kineococcus radiotolerans (strain ATCC BAA-149 / DSM 14245 / SRS30216).